The sequence spans 226 residues: uncharacterized protein (226 aa).

In terms of domain architecture, RNase H type-1 spans 71–207 (EPDDITVYFD…ADGLAKKILS (137 aa)).

This is an uncharacterized protein from Bacillus subtilis (strain 168).